Reading from the N-terminus, the 251-residue chain is Triosephosphate isomerase (251 aa).

9 to 11 provides a ligand contact to substrate; the sequence is NWK. His-95 (electrophile) is an active-site residue. Glu-167 (proton acceptor) is an active-site residue. Substrate contacts are provided by residues Gly-173, Ser-212, and 233-234; that span reads GG.

Belongs to the triosephosphate isomerase family. Homodimer.

The protein localises to the cytoplasm. It catalyses the reaction D-glyceraldehyde 3-phosphate = dihydroxyacetone phosphate. The protein operates within carbohydrate biosynthesis; gluconeogenesis. Its pathway is carbohydrate degradation; glycolysis; D-glyceraldehyde 3-phosphate from glycerone phosphate: step 1/1. Its function is as follows. Involved in the gluconeogenesis. Catalyzes stereospecifically the conversion of dihydroxyacetone phosphate (DHAP) to D-glyceraldehyde-3-phosphate (G3P). This chain is Triosephosphate isomerase, found in Pseudomonas entomophila (strain L48).